The primary structure comprises 485 residues: Elongation factor TuB, chloroplastic (485 aa).

A chloroplast-targeting transit peptide spans 1–76; the sequence is MASISAASAT…TTHPRRFTVR (76 aa). Residues 86-290 enclose the tr-type G domain; sequence KPHVNIGTIG…NVDEYIPIPQ (205 aa). Positions 95-102 are G1; it reads GHVDHGKT. 95–102 is a GTP binding site; sequence GHVDHGKT. Residues 136 to 140 are G2; that stretch reads GITIN. Residues 157-160 are G3; that stretch reads DCPG. GTP-binding positions include 157–161 and 212–215; these read DCPGH and NKQD. The segment at 212–215 is G4; that stretch reads NKQD. Positions 250-252 are G5; the sequence is SAL.

This sequence belongs to the TRAFAC class translation factor GTPase superfamily. Classic translation factor GTPase family. EF-Tu/EF-1A subfamily.

It localises to the plastid. Its subcellular location is the chloroplast. This protein promotes the GTP-dependent binding of aminoacyl-tRNA to the A-site of ribosomes during protein biosynthesis. The sequence is that of Elongation factor TuB, chloroplastic (TUFB) from Nicotiana sylvestris (Wood tobacco).